The primary structure comprises 182 residues: HGPRTase-like protein 1 (182 aa).

It belongs to the purine/pyrimidine phosphoribosyltransferase family. Archaeal HPRT subfamily.

In terms of biological role, may catalyze a purine salvage reaction, the substrate is unknown. This is HGPRTase-like protein 1 from Haloarcula marismortui (strain ATCC 43049 / DSM 3752 / JCM 8966 / VKM B-1809) (Halobacterium marismortui).